We begin with the raw amino-acid sequence, 134 residues long: Profilin-2 (134 aa).

The cysteines at positions 13 and 118 are disulfide-linked. Residues 84–100 (AVIRGKKGSGGITIKKT) carry the Involved in PIP2 interaction motif. Threonine 114 is modified (phosphothreonine).

The protein belongs to the profilin family. In terms of assembly, occurs in many kinds of cells as a complex with monomeric actin in a 1:1 ratio. Phosphorylated by MAP kinases.

It localises to the cytoplasm. It is found in the cytoskeleton. Binds to actin and affects the structure of the cytoskeleton. At high concentrations, profilin prevents the polymerization of actin, whereas it enhances it at low concentrations. The sequence is that of Profilin-2 from Olea europaea (Common olive).